We begin with the raw amino-acid sequence, 269 residues long: Signal recognition particle receptor subunit beta (269 aa).

The chain crosses the membrane as a helical span at residues 35-55; that stretch reads LLSVAVAVLAVLLTLVFWKFI. Residues 69–77 and 90–93 each bind GTP; these read GLCDSGKTL and TQTS. Serine 110 carries the phosphoserine modification. Glycine 118 lines the GTP pocket. Threonine 212 carries the phosphothreonine modification. Alanine 246 provides a ligand contact to GTP.

The protein belongs to the SRP receptor beta subunit family. Heterodimer with SRPRA.

It is found in the endoplasmic reticulum membrane. Functionally, component of the signal recognition particle (SRP) complex receptor (SR). Ensures, in conjunction with the SRP complex, the correct targeting of the nascent secretory proteins to the endoplasmic reticulum membrane system. May mediate the membrane association of SR. The polypeptide is Signal recognition particle receptor subunit beta (Srprb) (Rattus norvegicus (Rat)).